Here is a 267-residue protein sequence, read N- to C-terminus: 2-keto-3-deoxy-L-rhamnonate aldolase (267 aa).

His49 (proton acceptor) is an active-site residue. Gln151 contributes to the substrate binding site. Glu153 serves as a coordination point for Mg(2+). Substrate-binding residues include Ala178 and Asp179. Position 179 (Asp179) interacts with Mg(2+).

This sequence belongs to the HpcH/HpaI aldolase family. KDR aldolase subfamily. As to quaternary structure, homohexamer. It depends on Mg(2+) as a cofactor. Ni(2+) is required as a cofactor.

The enzyme catalyses 2-dehydro-3-deoxy-L-rhamnonate = (S)-lactaldehyde + pyruvate. The catalysed reaction is D-glyceraldehyde + 3-hydroxypyruvate = (3R,4S,5R)-3,4,5,6-tetrahydroxy-2-oxohexanoate. It catalyses the reaction D-glyceraldehyde + 3-hydroxypyruvate = 2-dehydro-D-gluconate. It carries out the reaction D-glyceraldehyde + 3-hydroxypyruvate = 2-dehydro-D-galactonate. The enzyme catalyses D-glyceraldehyde + pyruvate = 2-dehydro-3-deoxy-L-galactonate. The catalysed reaction is 2-dehydro-3-deoxy-D-gluconate = D-glyceraldehyde + pyruvate. In terms of biological role, catalyzes the reversible retro-aldol cleavage of 2-keto-3-deoxy-L-rhamnonate (KDR) to pyruvate and lactaldehyde. 2-keto-3-deoxy-L-mannonate, 2-keto-3-deoxy-L-lyxonate and 4-hydroxy-2-ketoheptane-1,7-dioate (HKHD) are also reasonably good substrates, although 2-keto-3-deoxy-L-rhamnonate is likely to be the physiological substrate. In vitro, can catalyze the aldolisation reaction between hydroxypyruvate (HPA) or pyruvate (PA) and D-glyceraldehyde (D-GA). The condensation of hydroxypyruvate and D-glyceraldehyde produces (3R,4S,5R)-3,4,5,6-tetrahydroxy-2-oxohexanoate as the major product, 2-dehydro-D-gluconate and 2-dehydro-D-galactonate. The condensation of pyruvate and D-glyceraldehyde produces 2-dehydro-3-deoxy-L-galactonate as the major product and 2-dehydro-3-deoxy-D-gluconate. The protein is 2-keto-3-deoxy-L-rhamnonate aldolase (rhmA) of Escherichia coli (strain K12).